Here is a 268-residue protein sequence, read N- to C-terminus: Testis-specific serine/threonine-protein kinase 3 (268 aa).

Residues 10 to 265 form the Protein kinase domain; the sequence is YQLGKTIGEG…IEEVSWHPWL (256 aa). Residues 16–24 and Lys-39 each bind ATP; that span reads IGEGTYSKV. Asp-134 functions as the Proton acceptor in the catalytic mechanism. At Ser-166 the chain carries Phosphoserine. Thr-168 carries the phosphothreonine modification.

This sequence belongs to the protein kinase superfamily. CAMK Ser/Thr protein kinase family. Mg(2+) serves as cofactor. The cofactor is Mn(2+). Post-translationally, autophosphorylated at Ser-166. Phosphorylation at Thr-168 by PDPK1 activates the serine/threonine protein kinase activity.

It is found in the cell projection. Its subcellular location is the cilium. The protein localises to the flagellum. The enzyme catalyses L-seryl-[protein] + ATP = O-phospho-L-seryl-[protein] + ADP + H(+). It carries out the reaction L-threonyl-[protein] + ATP = O-phospho-L-threonyl-[protein] + ADP + H(+). With respect to regulation, activated by phosphorylation on Thr-168 by PDPK1. Its function is as follows. Serine/threonine protein kinase required for spermatid development and male fertility. The polypeptide is Testis-specific serine/threonine-protein kinase 3 (Homo sapiens (Human)).